Reading from the N-terminus, the 94-residue chain is Small ribosomal subunit protein uS19 (94 aa).

This sequence belongs to the universal ribosomal protein uS19 family.

Protein S19 forms a complex with S13 that binds strongly to the 16S ribosomal RNA. The protein is Small ribosomal subunit protein uS19 of Moorella thermoacetica (strain ATCC 39073 / JCM 9320).